The primary structure comprises 450 residues: Sensor histidine kinase EnvZ (450 aa).

Residues 1–15 (MRRLRFSPRSSFART) lie on the Cytoplasmic side of the membrane. Residues 16–35 (LLLIVTLLFASLVTTYLVVL) form a helical membrane-spanning segment. Topologically, residues 36-158 (NFAILPSLQQ…LTEIHQGDFS (123 aa)) are periplasmic. The short motif at 71–75 (VVPPA) is the polyP-periplasmic motif element. A helical membrane pass occupies residues 159-179 (PLFRYTLAIMLLAIGGAWLFI). An HAMP domain is found at 180–232 (RIQNRPLVDLEHAALQVGKGIIPPPLREYGASEVRSVTRAFNHMAAGVKQLAD). The Cytoplasmic portion of the chain corresponds to 180 to 450 (RIQNRPLVDL…TRAQGTTKEG (271 aa)). Positions 201 to 205 (IPPPL) match the polyP-cytoplasmic motif motif. Residues 223-289 (MAAGVKQLAD…IIEQFIDYLR (67 aa)) are cytoplasmic dimerization domain (CDD), when dimerized forms osmosensitive core. A Histidine kinase domain is found at 240-440 (GVSHDLRTPL…SIRAWLPVPV (201 aa)). ATP is bound by residues histidine 243, 347–351 (NAARY), aspartate 373, 392–393 (RG), and 402–406 (TGLGL). The residue at position 243 (histidine 243) is a Phosphohistidine; by autocatalysis.

In terms of assembly, homodimer. Interacts with MzrA. Post-translationally, autophosphorylated. Incubation of isolated EnvZ C-terminal fragment (residues 180-450) with increasing levels of NaCl or sucrose increases its autophosphorylation.

It is found in the cell inner membrane. The catalysed reaction is ATP + protein L-histidine = ADP + protein N-phospho-L-histidine.. Its activity is regulated as follows. Activity is modulated by MzrA. In the presence of 0.2 M NaCl, 2.0 mM sodium cholate (bile salts) decreases expression from the ompC promoter; how this is mediated is unknown. Autophosphorylation is inhibited by the angucycline antibiotic waldiomycin in a non-competitive manner; waldiomycin prevents dimerization of the cytoplasmic domain and autophosphorylation. Member of the two-component regulatory system EnvZ/OmpR involved in osmoregulation (particularly of genes ompF and ompC) as well as other genes. EnvZ functions as a membrane-associated protein kinase that phosphorylates OmpR in response to environmental signals; at low osmolarity OmpR activates ompF transcription, while at high osmolarity it represses ompF and activates ompC transcription. Also dephosphorylates OmpR in the presence of ATP. The cytoplasmic dimerization domain (CDD) forms an osmosensitive core; increasing osmolarity stabilizes this segment (possibly by its contraction), enhancing the autophosphorylation rate and consequently, downstream phosphotransfer to OmpR and signaling. Autophosphorylation is greater when full-length EnvZ is reconstituted in a lipid environment, lipid-mediated allostery impacts the kinase function of EnvZ. Involved in acid stress response; this requires EnvZ but not OmpR phosphorylation, and suggests that EnvZ senses cytoplasmic acidic pH. The chain is Sensor histidine kinase EnvZ (envZ) from Escherichia coli (strain K12).